The primary structure comprises 229 residues: 7-cyano-7-deazaguanine synthase (229 aa).

12 to 22 provides a ligand contact to ATP; sequence LSGGMDSCVCA. Zn(2+) is bound by residues Cys194, Cys202, Cys205, and Cys208.

It belongs to the QueC family. The cofactor is Zn(2+).

The catalysed reaction is 7-carboxy-7-deazaguanine + NH4(+) + ATP = 7-cyano-7-deazaguanine + ADP + phosphate + H2O + H(+). The protein operates within purine metabolism; 7-cyano-7-deazaguanine biosynthesis. Catalyzes the ATP-dependent conversion of 7-carboxy-7-deazaguanine (CDG) to 7-cyano-7-deazaguanine (preQ(0)). The chain is 7-cyano-7-deazaguanine synthase from Acidobacterium capsulatum (strain ATCC 51196 / DSM 11244 / BCRC 80197 / JCM 7670 / NBRC 15755 / NCIMB 13165 / 161).